An 883-amino-acid chain; its full sequence is MDAPKEIFLKNYTKPDYYFETVDLSFSLGEEKTIVSSKIKVSPRVKGSSAALVLDGHDLKLLSVKVEGKLLKEGDYQLDSRHLTLPSLPAEESFVLEIDTEIYPHKNTSLEGLYKSSGNFCTQCEAEGFRKITFYQDRPDIMAKYTCRVEGDKTLYPVLLSNGNLISQGDIEGGRHYALWEDPFKKPCYLFALVAGQLVSRDDTFTTRSGRQVSLKIWTPAEDLPKTAHAMYSLKAAMKWDEDVFGLEYDLDLFNIVAVPDFNMGAMENKSLNIFNSKLVLASPETATDADYAAILGVIGHEYFHNWTGNRVTCRDWFQLSLKEGLTVFRDQEFSSDMGSRTVKRIADVSKLRIYQFPQDAGPMAHPVRPHSYIKMDNFYTVTVYEKGAEVVRMYKTLLGTQGFRKGIDLYFERHDEQAVTCEDFFAAMRDANNADFANFLQWYSQAGTPVVKVVSSYNADARTFSLKFSQEIPPTPGQPTKEPTFIPVVVGLLDSSGKDITLSSVHHDGTVQTISGSSTILRVTKKEEEFVFSDIPERPVPSLFRGFSAPVRVETDLSNDDLFFLLAHDSDEFNRWEAGQVLARKLMLNLVSDFQQNKPLALNPKFVQGLGSVLSDSSLDKEFIAKAITLPGEGEIMDMMAVADPDAVHAVRKFVRKQLASELKEELLKIVENNRSTEAYVFDHSNMARRALKNTALAYLASLEDPAYMELALNEYKMATNLTDQFAALAALSQNPGKTRDDILADFYNKWQDDYLVVNKWFLLQSTSDIPGNVENVKKLLDHPAFDLRNPNKVYSLIGGFCGSPVNFHAKDGSGYKFLGDIVVQLDKLNPQVASRMVSAFSRWKRYDETRQGLAKAQLEMIMSANGLSENVFEIASKSLAA.

Substrate is bound by residues glutamate 125 and 265 to 269; that span reads GAMEN. Residue histidine 301 coordinates Zn(2+). Glutamate 302 acts as the Proton acceptor in catalysis. Positions 305 and 324 each coordinate Zn(2+).

This sequence belongs to the peptidase M1 family. The cofactor is Zn(2+).

It catalyses the reaction Release of an N-terminal amino acid, preferentially alanine, from a wide range of peptides, amides and arylamides.. With respect to regulation, strongly inhibited by puromycin and DAMPAQ-22. Aminopeptidase with broad substrate specificity for several peptides. Involved in proteolytic events essential for cell growth and viability. Plays an essential role during prophase I of meiosis. Required for correct meiotic reconbination in both male and female gametophytes. This Arabidopsis thaliana (Mouse-ear cress) protein is Puromycin-sensitive aminopeptidase (MPA1).